The primary structure comprises 998 residues: Bifunctional glutamine synthetase adenylyltransferase/adenylyl-removing enzyme (998 aa).

The adenylyl removase stretch occupies residues 1 to 487 (MVVTKPATQR…LHAKLFYQPL (487 aa)). The interval 492–998 (GPAGLEIRHG…KAVVCKVFGS (507 aa)) is adenylyl transferase.

The protein belongs to the GlnE family. It depends on Mg(2+) as a cofactor.

It catalyses the reaction [glutamine synthetase]-O(4)-(5'-adenylyl)-L-tyrosine + phosphate = [glutamine synthetase]-L-tyrosine + ADP. It carries out the reaction [glutamine synthetase]-L-tyrosine + ATP = [glutamine synthetase]-O(4)-(5'-adenylyl)-L-tyrosine + diphosphate. Functionally, involved in the regulation of glutamine synthetase GlnA, a key enzyme in the process to assimilate ammonia. When cellular nitrogen levels are high, the C-terminal adenylyl transferase (AT) inactivates GlnA by covalent transfer of an adenylyl group from ATP to specific tyrosine residue of GlnA, thus reducing its activity. Conversely, when nitrogen levels are low, the N-terminal adenylyl removase (AR) activates GlnA by removing the adenylyl group by phosphorolysis, increasing its activity. The regulatory region of GlnE binds the signal transduction protein PII (GlnB) which indicates the nitrogen status of the cell. The chain is Bifunctional glutamine synthetase adenylyltransferase/adenylyl-removing enzyme from Mycolicibacterium paratuberculosis (strain ATCC BAA-968 / K-10) (Mycobacterium paratuberculosis).